The chain runs to 249 residues: 3-deoxy-D-manno-octulosonic acid kinase (249 aa).

The active site involves Asp-175.

This sequence belongs to the protein kinase superfamily. KdkA/RfaP family.

Its subcellular location is the cell inner membrane. It carries out the reaction an alpha-Kdo-(2-&gt;6)-lipid IVA + ATP = a 4-O-phospho-alpha-Kdo-(2-&gt;6)-lipid IVA + ADP + H(+). The protein operates within bacterial outer membrane biogenesis; LPS core biosynthesis. Functionally, catalyzes the ATP-dependent phosphorylation of the 3-deoxy-D-manno-octulosonic acid (Kdo) residue in Kdo-lipid IV(A) at the 4-OH position. The sequence is that of 3-deoxy-D-manno-octulosonic acid kinase from Stenotrophomonas maltophilia (strain K279a).